Reading from the N-terminus, the 504-residue chain is D-alanine--D-alanyl carrier protein ligase (504 aa).

152–153 (TS) is an ATP binding site. D-alanine is bound at residue D197. 292-297 (NTYGPT) lines the ATP pocket. V301 lines the D-alanine pocket. ATP is bound by residues D383, 394 to 397 (YNGR), and K492. K492 is a D-alanine binding site.

The protein belongs to the ATP-dependent AMP-binding enzyme family. DltA subfamily.

Its subcellular location is the cytoplasm. The enzyme catalyses holo-[D-alanyl-carrier protein] + D-alanine + ATP = D-alanyl-[D-alanyl-carrier protein] + AMP + diphosphate. It participates in cell wall biogenesis; lipoteichoic acid biosynthesis. In terms of biological role, catalyzes the first step in the D-alanylation of lipoteichoic acid (LTA), the activation of D-alanine and its transfer onto the D-alanyl carrier protein (Dcp) DltC. In an ATP-dependent two-step reaction, forms a high energy D-alanyl-AMP intermediate, followed by transfer of the D-alanyl residue as a thiol ester to the phosphopantheinyl prosthetic group of the Dcp. D-alanylation of LTA plays an important role in modulating the properties of the cell wall in Gram-positive bacteria, influencing the net charge of the cell wall. This Bacillus thuringiensis (strain Al Hakam) protein is D-alanine--D-alanyl carrier protein ligase.